The chain runs to 198 residues: Pyridoxal 5'-phosphate synthase subunit PdxT (198 aa).

Residue glycine 52–serine 54 participates in L-glutamine binding. Cysteine 84 serves as the catalytic Nucleophile. L-glutamine-binding positions include arginine 115 and isoleucine 142–arginine 143. Active-site charge relay system residues include histidine 178 and glutamate 180.

It belongs to the glutaminase PdxT/SNO family. In the presence of PdxS, forms a dodecamer of heterodimers. Only shows activity in the heterodimer.

The enzyme catalyses aldehydo-D-ribose 5-phosphate + D-glyceraldehyde 3-phosphate + L-glutamine = pyridoxal 5'-phosphate + L-glutamate + phosphate + 3 H2O + H(+). It catalyses the reaction L-glutamine + H2O = L-glutamate + NH4(+). It participates in cofactor biosynthesis; pyridoxal 5'-phosphate biosynthesis. Functionally, catalyzes the hydrolysis of glutamine to glutamate and ammonia as part of the biosynthesis of pyridoxal 5'-phosphate. The resulting ammonia molecule is channeled to the active site of PdxS. The sequence is that of Pyridoxal 5'-phosphate synthase subunit PdxT from Archaeoglobus fulgidus (strain ATCC 49558 / DSM 4304 / JCM 9628 / NBRC 100126 / VC-16).